A 529-amino-acid chain; its full sequence is Bifunctional purine biosynthesis protein PurH (529 aa).

The MGS-like domain occupies 1–148 (MQQRRPVRRA…KNHKDVAIVV (148 aa)). An N6-acetyllysine modification is found at K287.

This sequence belongs to the PurH family.

The enzyme catalyses (6R)-10-formyltetrahydrofolate + 5-amino-1-(5-phospho-beta-D-ribosyl)imidazole-4-carboxamide = 5-formamido-1-(5-phospho-D-ribosyl)imidazole-4-carboxamide + (6S)-5,6,7,8-tetrahydrofolate. It carries out the reaction IMP + H2O = 5-formamido-1-(5-phospho-D-ribosyl)imidazole-4-carboxamide. It functions in the pathway purine metabolism; IMP biosynthesis via de novo pathway; 5-formamido-1-(5-phospho-D-ribosyl)imidazole-4-carboxamide from 5-amino-1-(5-phospho-D-ribosyl)imidazole-4-carboxamide (10-formyl THF route): step 1/1. Its pathway is purine metabolism; IMP biosynthesis via de novo pathway; IMP from 5-formamido-1-(5-phospho-D-ribosyl)imidazole-4-carboxamide: step 1/1. The polypeptide is Bifunctional purine biosynthesis protein PurH (Escherichia coli O9:H4 (strain HS)).